The chain runs to 517 residues: MQRSDPPRPLLEMRGISKTFPAVRALAGVSLTVHPGEVHSLMGENGAGKSTLMKILSGAYQADPGGEILIDGRPISIDGPLAAREAGVAVIYQELCLAPNLSVAENIHVGRELRRGNGRRGTIDRAAMARGCQDVLERLGADFGPNTLVGTLSIAEQQLVEIARAVHTRARILVMDEPTTPLSSRETDNLFRLIRQLRAEGLAIIYISHRMAEIYELSDRVSVLRDGAYVGTLERDALSAERLVGMMVGRDISGFYKKAHAPYDPGNLLLSVRDIADGARVRGCSLDLHAGEVLGIAGLVGAGRTELARLIFGAEPRVRGEVTLAGKAFAAHSPREAIDAGLVYLTEDRKRQGLFLDMSVRENINISVCGRDARLGALDLARGAQRARDAIAALSIRVPHANVNVGALSGGNQQKVLLSRLLETKPRVLILDEPTRGVDIGAKSEIYRIINELARAGVGVIVISSELPEIIGVADRVLVMREGRIAGELGGRTDAPITQEAIIALATGSRTEASAAH.

ABC transporter domains lie at 11 to 251 and 263 to 507; these read LEMR…VGRD and YDPG…ALAT. 43–50 contributes to the ATP binding site; it reads GENGAGKS.

This sequence belongs to the ABC transporter superfamily. Ribose importer (TC 3.A.1.2.1) family. In terms of assembly, the complex is composed of an ATP-binding protein (RbsA), two transmembrane proteins (RbsC) and a solute-binding protein (RbsB).

The protein resides in the cell inner membrane. It catalyses the reaction D-ribose(out) + ATP + H2O = D-ribose(in) + ADP + phosphate + H(+). Functionally, part of the ABC transporter complex RbsABC involved in ribose import. Responsible for energy coupling to the transport system. In Burkholderia pseudomallei (strain 1710b), this protein is Ribose import ATP-binding protein RbsA 2.